A 20-amino-acid polypeptide reads, in one-letter code: Cytochrome c oxidase subunit 5B heart, mitochondrial (20 aa).

Positions 1 to 20 (XXLKGIPTDEEQATGLEEYA) are disordered.

Belongs to the cytochrome c oxidase subunit 5B family. As to quaternary structure, component of the cytochrome c oxidase (complex IV, CIV), a multisubunit enzyme composed of 14 subunits. The complex is composed of a catalytic core of 3 subunits MT-CO1, MT-CO2 and MT-CO3, encoded in the mitochondrial DNA, and 11 supernumerary subunits COX4I, COX5A, COX5B, COX6A, COX6B, COX6C, COX7A, COX7B, COX7C, COX8 and NDUFA4, which are encoded in the nuclear genome. The complex exists as a monomer or a dimer and forms supercomplexes (SCs) in the inner mitochondrial membrane with NADH-ubiquinone oxidoreductase (complex I, CI) and ubiquinol-cytochrome c oxidoreductase (cytochrome b-c1 complex, complex III, CIII), resulting in different assemblies (supercomplex SCI(1)III(2)IV(1) and megacomplex MCI(2)III(2)IV(2)).

It localises to the mitochondrion inner membrane. The protein operates within energy metabolism; oxidative phosphorylation. Functionally, component of the cytochrome c oxidase, the last enzyme in the mitochondrial electron transport chain which drives oxidative phosphorylation. The respiratory chain contains 3 multisubunit complexes succinate dehydrogenase (complex II, CII), ubiquinol-cytochrome c oxidoreductase (cytochrome b-c1 complex, complex III, CIII) and cytochrome c oxidase (complex IV, CIV), that cooperate to transfer electrons derived from NADH and succinate to molecular oxygen, creating an electrochemical gradient over the inner membrane that drives transmembrane transport and the ATP synthase. Cytochrome c oxidase is the component of the respiratory chain that catalyzes the reduction of oxygen to water. Electrons originating from reduced cytochrome c in the intermembrane space (IMS) are transferred via the dinuclear copper A center (CU(A)) of subunit 2 and heme A of subunit 1 to the active site in subunit 1, a binuclear center (BNC) formed by heme A3 and copper B (CU(B)). The BNC reduces molecular oxygen to 2 water molecules using 4 electrons from cytochrome c in the IMS and 4 protons from the mitochondrial matrix. This is Cytochrome c oxidase subunit 5B heart, mitochondrial from Oncorhynchus mykiss (Rainbow trout).